The primary structure comprises 159 residues: Type-1 angiotensin II receptor-associated protein (159 aa).

Residues 1–23 (MELPAVNLKVILLGHWLLTTWGC) lie on the Extracellular side of the membrane. Residues 24 to 44 (IVFSGSYAWANFTILALGVWA) traverse the membrane as a helical segment. Residues 45–55 (VAQRDSIDAIS) lie on the Cytoplasmic side of the membrane. Residues 56–76 (MFLGGLLATIFLDIVHISIFY) traverse the membrane as a helical segment. Over 77–86 (PRVSLTDTGR) the chain is Extracellular. The chain crosses the membrane as a helical span at residues 87-107 (FGVGMAILSLLLKPLSCCFVY). Residues 108–159 (HMYRERGGELLVHTGFLGSSQDRSAYQTIDSAEAPADPFAVPEGRSQDARGY) are Cytoplasmic-facing. The interaction with AGTR1 stretch occupies residues 110 to 122 (YRERGGELLVHTG). 2 positions are modified to phosphoserine: Ser-126 and Ser-127. The residue at position 135 (Thr-135) is a Phosphothreonine. Phosphoserine is present on residues Ser-138 and Ser-153. Residues 140–159 (EAPADPFAVPEGRSQDARGY) are disordered.

As to quaternary structure, interacts with RACK1, and with the C-terminal region of AGTR1. In terms of tissue distribution, ubiquitous but more abundant in kidney, heart, pancreas and thyroid.

It localises to the endoplasmic reticulum membrane. The protein localises to the golgi apparatus membrane. It is found in the cytoplasmic vesicle membrane. In terms of biological role, appears to be a negative regulator of type-1 angiotensin II receptor-mediated signaling by regulating receptor internalization as well as mechanism of receptor desensitization such as phosphorylation. Also induces a decrease in cell proliferation and angiotensin II-stimulated transcriptional activity. The chain is Type-1 angiotensin II receptor-associated protein (AGTRAP) from Homo sapiens (Human).